Consider the following 397-residue polypeptide: MFQKVDAYAGDPILTLMERFKEDPRSDKVNLSIGLYYNEDGIIPQLQAVAEAEARLNAQPHGASLYLPMEGLNCYRHAIAPLLFGADHPVLKQQRVATIQTLGGSGALKVGADFLKRYFPESGVWVSDPTWENHVAIFAGAGFEVSTYPWYDEATNGVRFNDLLATLKTLPARSIVLLHPCCHNPTGADLTNDQWDAVIEILKARELIPFLDIAYQGFGAGMEEDAYAIRAIASAGLPALVSNSFSKIFSLYGERVGGLSVMCEDAEAAGRVLGQLKATVRRNYSSPPNFGAQVVAAVLNDEALKASWLAEVEEMRTRILAMRQELVKVLSTEMPERNFDYLLNQRGMFSYTGLSAAQVDRLREEFGVYLIASGRMCVAGLNTANVQRVAKAFAAVM.

Substrate contacts are provided by Gly-34, Tyr-66, Trp-131, and Asn-184. N6-(pyridoxal phosphate)lysine is present on Lys-247. Substrate-binding residues include Arg-281 and Arg-375.

It belongs to the class-I pyridoxal-phosphate-dependent aminotransferase family. In terms of assembly, homodimer. Requires pyridoxal 5'-phosphate as cofactor.

It localises to the cytoplasm. It carries out the reaction an aromatic L-alpha-amino acid + 2-oxoglutarate = an aromatic oxo-acid + L-glutamate. It catalyses the reaction (3S)-3-methyl-L-phenylalanine + 2-oxoglutarate = (3S)-2-oxo-3-phenylbutanoate + L-glutamate. The protein operates within amino-acid biosynthesis; L-phenylalanine biosynthesis; L-phenylalanine from phenylpyruvate (ArAT route): step 1/1. It participates in amino-acid biosynthesis; L-tyrosine biosynthesis; L-tyrosine from (4-hydroxyphenyl)pyruvate: step 1/1. Broad-specificity enzyme that catalyzes the transamination of 2-ketoisocaproate, p-hydroxyphenylpyruvate, and phenylpyruvate to yield leucine, tyrosine, and phenylalanine, respectively. In vitro, is able to catalyze the conversion of beta-methyl phenylpyruvate to the nonproteinogenic amino acid (2S,3S)-beta-methyl-phenylalanine, a building block of the antibiotic mannopeptimycin produced by Streptomyces hygroscopicus NRRL3085. This chain is Aromatic-amino-acid aminotransferase (tyrB), found in Escherichia coli (strain K12).